Here is a 37-residue protein sequence, read N- to C-terminus: Cytochrome b6-f complex subunit 5 (37 aa).

Residues 5–25 (LLSGIVLGLIPITLAGLFVTA) form a helical membrane-spanning segment.

The protein belongs to the PetG family. In terms of assembly, the 4 large subunits of the cytochrome b6-f complex are cytochrome b6, subunit IV (17 kDa polypeptide, PetD), cytochrome f and the Rieske protein, while the 4 small subunits are PetG, PetL, PetM and PetN. The complex functions as a dimer.

It is found in the plastid. The protein localises to the chloroplast thylakoid membrane. Its function is as follows. Component of the cytochrome b6-f complex, which mediates electron transfer between photosystem II (PSII) and photosystem I (PSI), cyclic electron flow around PSI, and state transitions. PetG is required for either the stability or assembly of the cytochrome b6-f complex. This Cryptomeria japonica (Japanese cedar) protein is Cytochrome b6-f complex subunit 5.